Reading from the N-terminus, the 156-residue chain is Arginine repressor (156 aa).

This sequence belongs to the ArgR family.

The protein resides in the cytoplasm. It participates in amino-acid biosynthesis; L-arginine biosynthesis [regulation]. Its function is as follows. Regulates arginine biosynthesis genes. This chain is Arginine repressor, found in Enterobacter sp. (strain 638).